A 383-amino-acid polypeptide reads, in one-letter code: Acetylornithine deacetylase (383 aa).

Zn(2+) is bound at residue His-80. Asp-82 is a catalytic residue. A Zn(2+)-binding site is contributed by Asp-112. Residue Glu-144 is part of the active site. Residues Glu-145, Glu-169, and His-355 each coordinate Zn(2+).

The protein belongs to the peptidase M20A family. ArgE subfamily. In terms of assembly, homodimer. Requires Zn(2+) as cofactor. It depends on Co(2+) as a cofactor. Glutathione is required as a cofactor.

Its subcellular location is the cytoplasm. It carries out the reaction N(2)-acetyl-L-ornithine + H2O = L-ornithine + acetate. It participates in amino-acid biosynthesis; L-arginine biosynthesis; L-ornithine from N(2)-acetyl-L-ornithine (linear): step 1/1. Functionally, catalyzes the hydrolysis of the amide bond of N(2)-acetylated L-amino acids. Cleaves the acetyl group from N-acetyl-L-ornithine to form L-ornithine, an intermediate in L-arginine biosynthesis pathway, and a branchpoint in the synthesis of polyamines. The sequence is that of Acetylornithine deacetylase from Pectobacterium carotovorum subsp. carotovorum (strain PC1).